Consider the following 751-residue polypeptide: Glutathione biosynthesis bifunctional protein GshAB (751 aa).

A glutamate--cysteine ligase region spans residues 1-336 (MELDAVGKAI…QADQLTRQVL (336 aa)).

In the N-terminal section; belongs to the glutamate--cysteine ligase type 1 family. Type 2 subfamily. Monomer.

The enzyme catalyses L-cysteine + L-glutamate + ATP = gamma-L-glutamyl-L-cysteine + ADP + phosphate + H(+). It catalyses the reaction gamma-L-glutamyl-L-cysteine + glycine + ATP = glutathione + ADP + phosphate + H(+). The protein operates within sulfur metabolism; glutathione biosynthesis; glutathione from L-cysteine and L-glutamate: step 1/2. It functions in the pathway sulfur metabolism; glutathione biosynthesis; glutathione from L-cysteine and L-glutamate: step 2/2. Synthesizes glutathione from L-glutamate and L-cysteine via gamma-L-glutamyl-L-cysteine. This Lactiplantibacillus plantarum (strain ATCC BAA-793 / NCIMB 8826 / WCFS1) (Lactobacillus plantarum) protein is Glutathione biosynthesis bifunctional protein GshAB (gshAB).